A 112-amino-acid polypeptide reads, in one-letter code: 87 kDa annexin-binding protein (112 aa).

Binds annexin.

This chain is 87 kDa annexin-binding protein, found in Physarum polycephalum (Slime mold).